We begin with the raw amino-acid sequence, 501 residues long: Phosphoethanolamine N-methyltransferase 1 (501 aa).

Positions 72, 77, 93, 118, 119, and 137 each coordinate S-adenosyl-L-homocysteine. Phosphocholine-binding residues include serine 170, threonine 175, glycine 176, arginine 180, and tyrosine 187. N-methylethanolamine phosphate is bound by residues 256–257 (QY) and tyrosine 265. Tyrosine 265 provides a ligand contact to phosphocholine. Positions 274, 275, 301, 323, 349, 350, and 366 each coordinate S-adenosyl-L-homocysteine. Phosphocholine is bound by residues tyrosine 397, tyrosine 411, arginine 415, tyrosine 417, and lysine 483. N-methylethanolamine phosphate is bound by residues tyrosine 397, tyrosine 411, 415-417 (RGY), and lysine 483.

This sequence belongs to the class I-like SAM-binding methyltransferase superfamily. PEAMT family.

The catalysed reaction is phosphoethanolamine + S-adenosyl-L-methionine = N-methylethanolamine phosphate + S-adenosyl-L-homocysteine + H(+). The enzyme catalyses N-methylethanolamine phosphate + S-adenosyl-L-methionine = N,N-dimethylethanolamine phosphate + S-adenosyl-L-homocysteine + H(+). It carries out the reaction N,N-dimethylethanolamine phosphate + S-adenosyl-L-methionine = phosphocholine + S-adenosyl-L-homocysteine + H(+). Its pathway is phospholipid metabolism; phosphatidylcholine biosynthesis; phosphocholine from phosphoethanolamine: step 1/1. Functionally, involved in phosphocholine biosynthesis. Catalyzes the N-methylation of phosphoethanolamine, phosphomonomethylethanolamine and phosphodimethylethanolamine, the three methylation steps required to convert phosphoethanolamine to phosphocholine (PC). May be involved in root development. The polypeptide is Phosphoethanolamine N-methyltransferase 1 (Zea mays (Maize)).